A 372-amino-acid chain; its full sequence is Beta-1,3-N-acetylglucosaminyltransferase radical fringe (372 aa).

At 1 to 10 (MNSSCLGLRR) the chain is on the cytoplasmic side. The helical; Signal-anchor for type II membrane protein transmembrane segment at 11 to 27 (TCFLLSVTAAAVLLLLL) threads the bilayer. The Lumenal segment spans residues 28-372 (PRGQPPAAPR…TIWCPNKKMS (345 aa)). The span at 30-48 (GQPPAAPRRRPPPAGPSRP) shows a compositional bias: pro residues. The interval 30 to 96 (GQPPAAPRRR…RVRMGPPGGS (67 aa)) is disordered. Positions 64–78 (DRGGGSGAAGGGRGV) are enriched in gly residues. Arginine 120 is a substrate binding site. The N-linked (GlcNAc...) asparagine glycan is linked to asparagine 159. 2 disulfide bridges follow: cysteine 160-cysteine 171 and cysteine 189-cysteine 253. Aspartate 193 serves as a coordination point for substrate. Mn(2+) is bound at residue aspartate 194. Residue aspartate 283 is part of the active site. Histidine 307 is a binding site for Mn(2+). A disulfide bond links cysteine 357 and cysteine 366.

This sequence belongs to the glycosyltransferase 31 family. Requires Mn(2+) as cofactor.

Its subcellular location is the golgi apparatus membrane. It catalyses the reaction 3-O-(alpha-L-fucosyl)-L-threonyl-[EGF-like domain protein] + UDP-N-acetyl-alpha-D-glucosamine = 3-O-(N-acetyl-beta-D-glucosaminyl-(1-&gt;3)-alpha-L-fucosyl)-L-threonyl-[EGF-like domain protein] + UDP + H(+). It carries out the reaction 3-O-(alpha-L-fucosyl)-L-seryl-[EGF-like domain protein] + UDP-N-acetyl-alpha-D-glucosamine = 3-O-(N-acetyl-beta-D-glucosaminyl-(1-&gt;3)-alpha-L-fucosyl)-L-seryl-[EGF-like domain protein] + UDP + H(+). Functionally, glycosyltransferase that initiates the elongation of O-linked fucose residues attached to EGF-like repeats in the extracellular domain of Notch molecules. Plays an important role in limb outgrowth, it directs the formation and positioning of the apical ectodermal ridge (AER), one of the key organizer centers of vertebrate limb development. In Gallus gallus (Chicken), this protein is Beta-1,3-N-acetylglucosaminyltransferase radical fringe (RFNG).